The chain runs to 47 residues: Large ribosomal subunit protein bL34 (47 aa).

Belongs to the bacterial ribosomal protein bL34 family.

The chain is Large ribosomal subunit protein bL34 from Corynebacterium glutamicum (strain R).